The following is a 397-amino-acid chain: Acetylornithine aminotransferase (397 aa).

Phe129 serves as a coordination point for pyridoxal 5'-phosphate. Residue Arg132 coordinates N(2)-acetyl-L-ornithine. Residue 214-217 (DEVQ) coordinates pyridoxal 5'-phosphate. Residue Lys243 is modified to N6-(pyridoxal phosphate)lysine. Ser271 serves as a coordination point for N(2)-acetyl-L-ornithine. Residue Thr272 participates in pyridoxal 5'-phosphate binding.

This sequence belongs to the class-III pyridoxal-phosphate-dependent aminotransferase family. ArgD subfamily. In terms of assembly, homodimer. Pyridoxal 5'-phosphate is required as a cofactor.

It is found in the cytoplasm. It carries out the reaction N(2)-acetyl-L-ornithine + 2-oxoglutarate = N-acetyl-L-glutamate 5-semialdehyde + L-glutamate. Its pathway is amino-acid biosynthesis; L-arginine biosynthesis; N(2)-acetyl-L-ornithine from L-glutamate: step 4/4. This Neisseria meningitidis serogroup A / serotype 4A (strain DSM 15465 / Z2491) protein is Acetylornithine aminotransferase.